The chain runs to 326 residues: N-acetyl-gamma-glutamyl-phosphate reductase (326 aa).

Cysteine 155 is an active-site residue.

This sequence belongs to the NAGSA dehydrogenase family. Type 1 subfamily.

The protein localises to the cytoplasm. It catalyses the reaction N-acetyl-L-glutamate 5-semialdehyde + phosphate + NADP(+) = N-acetyl-L-glutamyl 5-phosphate + NADPH + H(+). It functions in the pathway amino-acid biosynthesis; L-arginine biosynthesis; N(2)-acetyl-L-ornithine from L-glutamate: step 3/4. Catalyzes the NADPH-dependent reduction of N-acetyl-5-glutamyl phosphate to yield N-acetyl-L-glutamate 5-semialdehyde. The protein is N-acetyl-gamma-glutamyl-phosphate reductase of Shewanella baltica (strain OS223).